The chain runs to 196 residues: Protein Flattop (196 aa).

The interval 107–196 is disordered; sequence NGLRPEIFGK…PHAGRNLAEV (90 aa). A compositionally biased stretch (basic and acidic residues) spans 113–124; it reads IFGKPHDPDSQK. Residues 137–149 show a composition bias toward low complexity; it reads APSPTIIPSSPAS. A compositionally biased stretch (polar residues) spans 150–162; that stretch reads NLSSPDQLQSSHP.

Belongs to the Flattop family. As to quaternary structure, microtubule inner protein component of sperm flagellar doublet microtubules. Interacts with DLG3. As to expression, expressed in trachea multiciliated cells.

Its subcellular location is the cytoplasm. The protein localises to the cytoskeleton. It localises to the cilium basal body. The protein resides in the cell projection. It is found in the cilium. Its subcellular location is the apical cell membrane. The protein localises to the cilium axoneme. It localises to the flagellum axoneme. Functionally, microtubule inner protein (MIP) part of the dynein-decorated doublet microtubules (DMTs) in cilia axoneme. Acts as a regulator of cilium basal body docking and positioning in mono- and multiciliated cells. Regulates basal body docking and cilia formation in multiciliated lung cells. Regulates kinocilium positioning and stereocilia bundle morphogenesis in the inner ear. This chain is Protein Flattop, found in Bos taurus (Bovine).